The chain runs to 408 residues: Lipoate--protein ligase 1 (408 aa).

Residues 1-18 constitute a mitochondrion transit peptide; that stretch reads MKRIFRLVRRCHYSTEKR. Residues 60–242 enclose the BPL/LPL catalytic domain; it reads KFNEPILFLW…EFTKFYEQNY (183 aa). Residues Arg102, Gly107, and Tyr110 each coordinate ATP. Gly107 lines the (R)-lipoate pocket. Asp153 lines the Mg(2+) pocket. Residue Lys160 coordinates ATP. Residue Lys160 participates in (R)-lipoate binding.

It belongs to the LplA family.

It localises to the mitochondrion. The catalysed reaction is L-lysyl-[lipoyl-carrier protein] + (R)-lipoate + ATP = N(6)-[(R)-lipoyl]-L-lysyl-[lipoyl-carrier protein] + AMP + diphosphate + H(+). It catalyses the reaction (R)-dihydrolipoate + L-lysyl-[lipoyl-carrier protein] + ATP = N(6)-[(R)-dihydrolipoyl]-L-lysyl-[lipoyl-carrier protein] + AMP + diphosphate + H(+). It carries out the reaction (R)-dihydrolipoate + ATP + H(+) = N(6)-[(R)-dihydrolipoyl]-5'-AMP + diphosphate. The enzyme catalyses N(6)-[(R)-dihydrolipoyl]-5'-AMP + L-lysyl-[lipoyl-carrier protein] = N(6)-[(R)-dihydrolipoyl]-L-lysyl-[lipoyl-carrier protein] + AMP + 2 H(+). It participates in protein modification; protein lipoylation via exogenous pathway; protein N(6)-(lipoyl)lysine from lipoate: step 1/2. The protein operates within protein modification; protein lipoylation via exogenous pathway; protein N(6)-(lipoyl)lysine from lipoate: step 2/2. Its activity is regulated as follows. Inhibited by the lipoate analog 8-bromo-octanoate (BrO). Catalytic activity is increased in the presence of Mg(2+). In terms of biological role, catalyzes both the ATP-dependent activation of exogenously supplied lipoate to lipoyl-AMP and the transfer of the activated lipoyl onto the lipoyl domains of lipoate-dependent enzymes. In the mitochondrion, functions as a redox switch between two lipoylation routes. Senses the oxidation state of lipoate and determines which downstream enzymes will be lipoylated. In low reducing conditions, uses lipoate in its oxidized ring form to lipoylate glycine cleavage system H-protein GCVH. In high reducing conditions and together with LipL2, uses reduced lipoate (dihydrolipoate) to lipoylate the E2 component of the branched chain alpha-ketoacid dehydrogenase complex BCKDH-E2/BCDH and the E2 component of the alpha-ketoglutarate dehydrogenase complex KDH. LipL1 is responsible for catalysing the activation of lipoate, forming lipoyl-AMP while LipL2 is required but is not capable of catalyzing this reaction. The sequence is that of Lipoate--protein ligase 1 from Plasmodium falciparum (isolate 3D7).